The primary structure comprises 1403 residues: DNA-directed RNA polymerase subunit beta' (1403 aa).

Residues C70, C72, C85, and C88 each coordinate Zn(2+). The Mg(2+) site is built by D460, D462, and D464. C814, C888, C895, and C898 together coordinate Zn(2+). The tract at residues R1369 to A1403 is disordered. Positions E1379 to S1388 are enriched in polar residues.

It belongs to the RNA polymerase beta' chain family. As to quaternary structure, the RNAP catalytic core consists of 2 alpha, 1 beta, 1 beta' and 1 omega subunit. When a sigma factor is associated with the core the holoenzyme is formed, which can initiate transcription. The cofactor is Mg(2+). Zn(2+) is required as a cofactor.

It carries out the reaction RNA(n) + a ribonucleoside 5'-triphosphate = RNA(n+1) + diphosphate. DNA-dependent RNA polymerase catalyzes the transcription of DNA into RNA using the four ribonucleoside triphosphates as substrates. The polypeptide is DNA-directed RNA polymerase subunit beta' (Nitrosococcus oceani (strain ATCC 19707 / BCRC 17464 / JCM 30415 / NCIMB 11848 / C-107)).